A 180-amino-acid polypeptide reads, in one-letter code: uncharacterized protein (180 aa).

The protein localises to the mitochondrion. This is an uncharacterized protein from Marchantia polymorpha (Common liverwort).